Here is a 153-residue protein sequence, read N- to C-terminus: Aspartate carbamoyltransferase regulatory chain (153 aa).

The Zn(2+) site is built by cysteine 109, cysteine 114, cysteine 138, and cysteine 141.

Belongs to the PyrI family. In terms of assembly, contains catalytic and regulatory chains. Zn(2+) serves as cofactor.

In terms of biological role, involved in allosteric regulation of aspartate carbamoyltransferase. This is Aspartate carbamoyltransferase regulatory chain from Vibrio vulnificus (strain CMCP6).